The following is a 304-amino-acid chain: Protease HtpX homolog (304 aa).

2 helical membrane passes run 19-39 (FIVF…VSYF) and 41-61 (LGEI…YYAY). Histidine 146 contributes to the Zn(2+) binding site. Glutamate 147 is an active-site residue. A Zn(2+)-binding site is contributed by histidine 150. 2 helical membrane passes run 156–176 (VRLQ…GDGL) and 192–212 (NILG…ATLL). Glutamate 221 serves as a coordination point for Zn(2+).

It belongs to the peptidase M48B family. Zn(2+) is required as a cofactor.

Its subcellular location is the cell inner membrane. The polypeptide is Protease HtpX homolog (Dictyoglomus turgidum (strain DSM 6724 / Z-1310)).